The following is a 116-amino-acid chain: Large ribosomal subunit protein bL17 (116 aa).

This sequence belongs to the bacterial ribosomal protein bL17 family. In terms of assembly, part of the 50S ribosomal subunit. Contacts protein L32.

This is Large ribosomal subunit protein bL17 from Chloroflexus aggregans (strain MD-66 / DSM 9485).